The following is a 337-amino-acid chain: ATP-dependent 6-phosphofructokinase (337 aa).

An ATP-binding site is contributed by glycine 11. 21–25 (RAVVR) contacts ADP. ATP contacts are provided by residues 72-73 (RY) and 102-105 (GDGS). Aspartate 103 provides a ligand contact to Mg(2+). A substrate-binding site is contributed by 125-127 (TID). Aspartate 127 (proton acceptor) is an active-site residue. Arginine 154 is an ADP binding site. Substrate contacts are provided by residues arginine 162 and 169–171 (MGR). ADP is bound by residues 185 to 187 (GAD), lysine 212, and 214 to 216 (KNH). Residues glutamate 223, arginine 245, and 251-254 (HILR) contribute to the substrate site.

The protein belongs to the phosphofructokinase type A (PFKA) family. ATP-dependent PFK group I subfamily. Prokaryotic clade 'B1' sub-subfamily. In terms of assembly, homotetramer. Mg(2+) is required as a cofactor.

The protein resides in the cytoplasm. The enzyme catalyses beta-D-fructose 6-phosphate + ATP = beta-D-fructose 1,6-bisphosphate + ADP + H(+). The protein operates within carbohydrate degradation; glycolysis; D-glyceraldehyde 3-phosphate and glycerone phosphate from D-glucose: step 3/4. With respect to regulation, allosterically activated by ADP and other diphosphonucleosides, and allosterically inhibited by phosphoenolpyruvate. Functionally, catalyzes the phosphorylation of D-fructose 6-phosphate to fructose 1,6-bisphosphate by ATP, the first committing step of glycolysis. This Streptococcus pyogenes serotype M4 (strain MGAS10750) protein is ATP-dependent 6-phosphofructokinase.